Reading from the N-terminus, the 1322-residue chain is Myosin-1 (1322 aa).

The 687-residue stretch at Ala42–Asp728 folds into the Myosin motor domain. Gly135–Thr142 contributes to the ATP binding site. Ser369 is modified (phosphoserine). Residues Val417–Ala499 form an actin-binding region. 2 IQ domains span residues His732 to Ser752 and Ala753 to Gln778. One can recognise a TH1 domain in the interval Arg786–Arg980. Disordered regions lie at residues Ile966–Tyr1090 and Val1137–Ala1162. Composition is skewed to low complexity over residues Ser1000–Thr1017 and Gly1027–Ala1056. 2 stretches are compositionally biased toward polar residues: residues Pro1078–Met1087 and Val1137–Thr1148. The SH3 domain maps to Arg1184–Glu1243. The segment at Ala1246–Phe1300 is disordered. The segment covering Pro1257 to Ala1267 has biased composition (low complexity). A compositionally biased stretch (polar residues) spans Val1269–Pro1280.

This sequence belongs to the TRAFAC class myosin-kinesin ATPase superfamily. Myosin family. Phosphorylation of the TEDS site (Ser-369) is required for the polarization of the actin cytoskeleton. Phosphorylation probably activates the myosin-I ATPase activity.

The protein localises to the cytoplasm. It is found in the cytoskeleton. It localises to the actin patch. Its function is as follows. Type-I myosin implicated in the organization of the actin cytoskeleton. Required for proper actin cytoskeleton polarization. At the cell cortex, assembles in patch-like structures together with proteins from the actin-polymerizing machinery and promotes actin assembly. Functions as actin nucleation-promoting factor (NPF) for the Arp2/3 complex. The polypeptide is Myosin-1 (MYO1) (Malassezia globosa (strain ATCC MYA-4612 / CBS 7966) (Dandruff-associated fungus)).